Consider the following 1462-residue polypeptide: Copper-transporting ATPase 2 (1462 aa).

Residues Met-1 to Lys-23 form a disordered region. The Cytoplasmic segment spans residues Met-1–Ser-655. 4 HMA domains span residues Ala-68–Ser-134, Ala-153–Ala-219, Ala-267–Phe-333, and Arg-361–Ser-427. Cu(+) is bound by residues Cys-79, Cys-82, Cys-164, Cys-167, Cys-278, and Cys-281. The tract at residues Phe-333–Arg-361 is disordered. Cys-372 provides a ligand contact to Cu(+). A disordered region spans residues Lys-460–Thr-487. Positions Gly-475–Thr-487 are enriched in polar residues. 2 positions are modified to phosphoserine: Ser-478 and Ser-483. 2 consecutive HMA domains span residues Gln-490–Ser-556 and Gly-566–Ser-632. Cys-501, Cys-504, Cys-577, and Cys-580 together coordinate Cu(+). Residues Phe-656–Ser-677 traverse the membrane as a helical segment. Topologically, residues Ser-678–Leu-699 are extracellular. A helical transmembrane segment spans residues Ile-700 to Gln-719. Residues Ala-720–His-726 lie on the Cytoplasmic side of the membrane. The chain crosses the membrane as a helical span at residues Arg-727–Leu-747. At Val-748–Phe-766 the chain is on the extracellular side. Residues Asp-767–Lys-787 form a helical membrane-spanning segment. The Cytoplasmic segment spans residues Ser-788–Arg-921. The helical transmembrane segment at Phe-922 to Ile-944 threads the bilayer. At Gly-945 to Phe-974 the chain is on the extracellular side. A helical membrane pass occupies residues Gln-975–Ala-996. Over Val-997–Arg-1319 the chain is Cytoplasmic. The 4-aspartylphosphate intermediate role is filled by Asp-1029. The Mg(2+) site is built by Asp-1264 and Asp-1268. A helical membrane pass occupies residues Val-1320–Ala-1337. Topologically, residues Gly-1338 to Gln-1348 are extracellular. The chain crosses the membrane as a helical span at residues Pro-1349 to Leu-1368. Over Gln-1369 to Ile-1462 the chain is Cytoplasmic. Residues Ser-1395 and Ser-1454 each carry the phosphoserine modification.

The protein belongs to the cation transport ATPase (P-type) (TC 3.A.3) family. Type IB subfamily. As to quaternary structure, monomer. Interacts with COMMD1/MURR1. Interacts with DCTN4, in a copper-dependent manner. Interacts with ATOX1. Interacts (via C-terminus) with ZBTB16/PLZF. As to expression, detected in liver and kidney.

Its subcellular location is the golgi apparatus. It is found in the trans-Golgi network membrane. It localises to the late endosome. The catalysed reaction is Cu(+)(in) + ATP + H2O = Cu(+)(out) + ADP + phosphate + H(+). In terms of biological role, copper ion transmembrane transporter involved in the export of copper out of the cells, such as the efflux of hepatic copper into the bile. The polypeptide is Copper-transporting ATPase 2 (Atp7b) (Mus musculus (Mouse)).